Reading from the N-terminus, the 791-residue chain is Probable phosphoketolase (791 aa).

The protein belongs to the XFP family. The cofactor is thiamine diphosphate.

The sequence is that of Probable phosphoketolase from Chlorobaculum tepidum (strain ATCC 49652 / DSM 12025 / NBRC 103806 / TLS) (Chlorobium tepidum).